A 464-amino-acid polypeptide reads, in one-letter code: Fumarate hydratase class II 1 (464 aa).

Substrate contacts are provided by residues S96–T98, H127–D130, S137–N139, and T185. Residue H186 is the Proton donor/acceptor of the active site. The active site involves S316. Residues S317 and K322–N324 contribute to the substrate site.

This sequence belongs to the class-II fumarase/aspartase family. Fumarase subfamily. Homotetramer.

The protein resides in the cytoplasm. The catalysed reaction is (S)-malate = fumarate + H2O. Its pathway is carbohydrate metabolism; tricarboxylic acid cycle; (S)-malate from fumarate: step 1/1. In terms of biological role, involved in the TCA cycle. Catalyzes the stereospecific interconversion of fumarate to L-malate. The protein is Fumarate hydratase class II 1 of Pseudomonas aeruginosa (strain ATCC 15692 / DSM 22644 / CIP 104116 / JCM 14847 / LMG 12228 / 1C / PRS 101 / PAO1).